Reading from the N-terminus, the 156-residue chain is Cytochrome c-type biogenesis protein CcmE 1 (156 aa).

The Cytoplasmic segment spans residues 1-8 (MNATRKQR). The helical; Signal-anchor for type II membrane protein transmembrane segment at 9 to 29 (LWLVIGVLAAAALAVTLIVFA) threads the bilayer. Topologically, residues 30–156 (LQRNMSYLFT…ATVAPLTAPR (127 aa)) are periplasmic. His-123 and Tyr-127 together coordinate heme.

It belongs to the CcmE/CycJ family.

The protein resides in the cell inner membrane. Its function is as follows. Heme chaperone required for the biogenesis of c-type cytochromes. Transiently binds heme delivered by CcmC and transfers the heme to apo-cytochromes in a process facilitated by CcmF and CcmH. This is Cytochrome c-type biogenesis protein CcmE 1 from Xanthomonas axonopodis pv. citri (strain 306).